A 3063-amino-acid polypeptide reads, in one-letter code: Collagen alpha-1(XII) chain (3063 aa).

A signal peptide spans 1 to 23; it reads MRSRLPPALAALGAALLLSSIEA. The 91-residue stretch at 27–117 folds into the Fibronectin type-III 1 domain; it reads PPSDLNFKII…GQLTIQTGSS (91 aa). Residues 140-316 enclose the VWFA 1 domain; it reads DLVFLVDGSW…DIQNEIISQV (177 aa). Ser329 carries O-linked (Xyl...) (chondroitin sulfate) serine glycosylation. Residues 336 to 426 form the Fibronectin type-III 2 domain; it reads PPSNLIAMEV…SIMEKTQPMK (91 aa). The VWFA 2 domain occupies 440–616; it reads DIVFLVDGSY…RISFELTQSI (177 aa). Fibronectin type-III domains follow at residues 634-722, 725-816, 817-905, 907-998, 999-1087, and 1089-1179; these read PPKD…TEEV, APRN…VRGN, PRDL…LEER, SPQD…LSQD, SKTL…ASRF, and SPRN…TLSD. Asn700 carries N-linked (GlcNAc...) asparagine glycosylation. Ser798 is a glycosylation site (O-linked (Xyl...) (chondroitin sulfate) serine). The interval 799–830 is disordered; the sequence is GPGTPLTGNAATEEVRGNPRDLRVSDPTTSTM. The span at 811-822 shows a compositional bias: basic and acidic residues; it reads EEVRGNPRDLRV. The Cell attachment site signature appears at 862 to 864; it reads RGD. 2 O-linked (Xyl...) (chondroitin sulfate) serine glycosylation sites follow: Ser889 and Ser981. Residues 1077-1099 are disordered; sequence RQGSGTTASRFKSPRNLKTSDPT. Positions 1079–1099 are enriched in polar residues; that stretch reads GSGTTASRFKSPRNLKTSDPT. Residues 1199–1371 enclose the VWFA 3 domain; the sequence is DIVLLVDGSW…ESLSRIVDDL (173 aa). Fibronectin type-III domains follow at residues 1387 to 1476, 1477 to 1567, 1568 to 1658, 1659 to 1754, 1755 to 1849, 1850 to 1935, 1936 to 2026, 2027 to 2117, 2118 to 2206, and 2207 to 2294; these read APSN…LPVP, VVSL…LPLP, RPQD…VPAP, TNLK…APKS, GPRN…TVRN, LRVY…LMRG, LARN…LPRS, GPRN…VGLL, PPQN…LYLN, and VTDL…TVKP. Asn1763 is a glycosylation site (N-linked (GlcNAc...) asparagine). Residue Asn2206 is glycosylated (N-linked (GlcNAc...) asparagine). The segment at 2283-2312 is disordered; the sequence is GVSVKEHTTVKPTEAPTEPPTPPPPPTIPP. Residues 2299–2311 are compositionally biased toward pro residues; that stretch reads TEPPTPPPPPTIP. A VWFA 4 domain is found at 2323 to 2496; sequence DIVFLTDASW…ESFEKIEDNL (174 aa). The nonhelical region (NC3) stretch occupies residues 2451-2746; it reads SGFSVFVVGV…NSCTCTQDSV (296 aa). The region spanning 2520-2712 is the Laminin G-like domain; sequence GFKMLEAYNL…IQSFDIVCSP (193 aa). N-linked (GlcNAc...) asparagine glycans are attached at residues Asn2528 and Asn2679. 2 disordered regions span residues 2743–2896 and 2932–3063; these read QDSV…GDRG and NDYQ…PGSG. Collagen-like domains follow at residues 2747-2798, 2802-2852, 2853-2898, and 2941-2990; these read GPPG…GPNG, PGEQ…AMGP, RGPP…RGDI, and PGPP…GERG. The triple-helical region (COL2) with 1 imperfection stretch occupies residues 2747–2898; it reads GPPGPPGPAG…KGEKGDRGDI (152 aa). The Cell attachment site signature appears at 2779-2781; it reads RGD. Residues 2784–2794 show a composition bias toward pro residues; sequence PPGPQGPPGPQ. Over residues 2817–2826 the composition is skewed to low complexity; sequence PGLPGRTGTP. Pro residues-rich tracts occupy residues 2828–2837 and 2853–2862; these read LPGPPGPMGP and RGPPGPPGSP. Residues 2864-2874 show a composition bias toward low complexity; the sequence is SPGVTGPSGKP. A Cell attachment site motif is present at residues 2895–2897; sequence RGD. A nonhelical region (NC2) region spans residues 2899–2941; that stretch reads ASQNMMRAVARQVCEQLISGQMNRFNQMLNQIPNDYQSSRNQP. Residues 2941-2950 are compositionally biased toward pro residues; the sequence is PGPPGPPGPP. The interval 2942 to 3044 is triple-helical region (COL1) with 2 imperfections; sequence GPPGPPGPPG…RGPPGPPGYC (103 aa). 4-hydroxyproline occurs at positions 2944, 2947, 2950, 2959, 2965, 2968, 2971, 2983, 3000, 3003, 3014, 3023, 3026, and 3029. The segment covering 2957-2966 has biased composition (gly residues); it reads GEPGPGGRPG. The span at 3006 to 3020 shows a compositional bias: low complexity; it reads QGESRTGPPGSTGSR. The nonhelical region (NC1) stretch occupies residues 3045–3063; that stretch reads DSSQCASIPYNGQGYPGSG.

This sequence belongs to the fibril-associated collagens with interrupted helices (FACIT) family. Trimer of identical chains each containing 190 kDa of non-triple-helical sequences. In terms of processing, the triple-helical tail is stabilized by disulfide bonds at each end. Hydroxylation on proline residues within the sequence motif, GXPG, is most likely to be 4-hydroxy as this fits the requirement for 4-hydroxylation in vertebrates. Post-translationally, isoform 1 O-glycosylation; glycosaminoglycan of chondroitin-sulfate type. As to expression, found in collagen I-containing tissues: both isoform 1 and isoform 2 appear in amnion, chorion, skeletal muscle, small intestine, and in cell culture of dermal fibroblasts, keratinocytes and endothelial cells. Only isoform 2 is found in lung, placenta, kidney and a squamous cell carcinoma cell line. Isoform 1 is also present in the corneal epithelial Bowman's membrane (BM) and the interfibrillar matrix of the corneal stroma, but it is not detected in the limbal BM.

The protein resides in the secreted. The protein localises to the extracellular space. It localises to the extracellular matrix. Type XII collagen interacts with type I collagen-containing fibrils, the COL1 domain could be associated with the surface of the fibrils, and the COL2 and NC3 domains may be localized in the perifibrillar matrix. This chain is Collagen alpha-1(XII) chain (COL12A1), found in Homo sapiens (Human).